The chain runs to 580 residues: Probable alpha-1,3-mannosyltransferase MNT4 (580 aa).

At 1–10 (MVLRIRRIKK) the chain is on the cytoplasmic side. A helical; Signal-anchor for type II membrane protein membrane pass occupies residues 11-29 (LAPLIFTSLLSLIVLFRVY). Residues 30 to 580 (RQYPFSDHFE…KVVELWNKVV (551 aa)) lie on the Lumenal side of the membrane. N-linked (GlcNAc...) asparagine glycans are attached at residues asparagine 132, asparagine 167, asparagine 223, and asparagine 349.

This sequence belongs to the MNN1/MNT family.

Its subcellular location is the membrane. This chain is Probable alpha-1,3-mannosyltransferase MNT4 (MNT4), found in Saccharomyces cerevisiae (strain ATCC 204508 / S288c) (Baker's yeast).